The sequence spans 209 residues: MSEELAQKTEELSLDSKTVFDSKEEFNAKHPLNSRWTLWYTKPQTNKSENWHDLLKPVITFSSVEEFWGIYNSIPPANQLPLKSDYHLFKEGIRPEWEDEANSKGGKWQFSFNKKSEVNPIINDLWLRGLLAVIGETIEDEENEVNGIVLNIRKQAYRVGIWTKDCDESKLKTVGERLKKVLQLNDEQKVEFMSHDASNTRGAEPQIVL.

Residues Trp51–His52, Trp97–Glu98, and Arg153–Arg158 contribute to the mRNA site.

It belongs to the eukaryotic initiation factor 4E family. EIF4F is a multi-subunit complex, the composition of which varies with external and internal environmental conditions. It is composed of at least eIF4A, eIF4E and eIF4G. eIF4E is also known to interact with other partners.

Recognizes and binds the 7-methylguanosine-containing mRNA cap during an early step in the initiation of protein synthesis and facilitates ribosome binding by inducing the unwinding of the mRNAs secondary structures. In Candida albicans (strain SC5314 / ATCC MYA-2876) (Yeast), this protein is Eukaryotic translation initiation factor 4E (TIF45).